The primary structure comprises 228 residues: Adenosylcobinamide-GDP ribazoletransferase (228 aa).

Helical transmembrane passes span 24 to 44 (VWML…ILYL), 50 to 70 (NVLS…DGLA), 96 to 116 (IAGT…LFSA), 117 to 137 (PFYS…LALA), 159 to 176 (VFLG…ILLY), and 181 to 198 (IFAL…KISL).

This sequence belongs to the CobS family. Mg(2+) serves as cofactor.

It localises to the cell membrane. The enzyme catalyses alpha-ribazole + adenosylcob(III)inamide-GDP = adenosylcob(III)alamin + GMP + H(+). The catalysed reaction is alpha-ribazole 5'-phosphate + adenosylcob(III)inamide-GDP = adenosylcob(III)alamin 5'-phosphate + GMP + H(+). It functions in the pathway cofactor biosynthesis; adenosylcobalamin biosynthesis; adenosylcobalamin from cob(II)yrinate a,c-diamide: step 7/7. Joins adenosylcobinamide-GDP and alpha-ribazole to generate adenosylcobalamin (Ado-cobalamin). Also synthesizes adenosylcobalamin 5'-phosphate from adenosylcobinamide-GDP and alpha-ribazole 5'-phosphate. The chain is Adenosylcobinamide-GDP ribazoletransferase from Pyrococcus furiosus (strain ATCC 43587 / DSM 3638 / JCM 8422 / Vc1).